A 306-amino-acid chain; its full sequence is UDP-3-O-acyl-N-acetylglucosamine deacetylase (306 aa).

Zn(2+) contacts are provided by His-79, His-239, and Asp-243. The active-site Proton donor is the His-266.

This sequence belongs to the LpxC family. The cofactor is Zn(2+).

It carries out the reaction a UDP-3-O-[(3R)-3-hydroxyacyl]-N-acetyl-alpha-D-glucosamine + H2O = a UDP-3-O-[(3R)-3-hydroxyacyl]-alpha-D-glucosamine + acetate. The protein operates within glycolipid biosynthesis; lipid IV(A) biosynthesis; lipid IV(A) from (3R)-3-hydroxytetradecanoyl-[acyl-carrier-protein] and UDP-N-acetyl-alpha-D-glucosamine: step 2/6. Its function is as follows. Catalyzes the hydrolysis of UDP-3-O-myristoyl-N-acetylglucosamine to form UDP-3-O-myristoylglucosamine and acetate, the committed step in lipid A biosynthesis. In Haemophilus ducreyi (strain 35000HP / ATCC 700724), this protein is UDP-3-O-acyl-N-acetylglucosamine deacetylase.